The chain runs to 300 residues: uncharacterized protein (300 aa).

A divalent metal cation-binding residues include Glu146, Glu148, and Asp177.

The protein belongs to the FAH family.

This is an uncharacterized protein from Staphylococcus aureus (strain MW2).